The sequence spans 93 residues: Large ribosomal subunit protein uL23cz/uL23cy (93 aa).

It belongs to the universal ribosomal protein uL23 family. As to quaternary structure, part of the 50S ribosomal subunit.

It localises to the plastid. Its subcellular location is the chloroplast. Functionally, binds to 23S rRNA. This Piper cenocladum (Ant piper) protein is Large ribosomal subunit protein uL23cz/uL23cy (rpl23-A).